Consider the following 745-residue polypeptide: Junction plakoglobin (745 aa).

Met1 bears the N-acetylmethionine mark. Thr14 is a glycosylation site (O-linked (GlcNAc) threonine). Phosphoserine is present on residues Ser99 and Ser125. 12 ARM repeats span residues 132–171 (NYQD…QLSK), 172–215 (KEAS…LSHH), 216–255 (REGL…NLLL), 258–297 (EGAK…LLAY), 298–341 (GNQE…LSVC), 342–381 (PSNK…NLSD), 383–420 (ATKQ…NLTC), 423–464 (SKNK…HLTS), 470–510 (EMAQ…NLAL), 512–551 (PANH…QPYT), 574–613 (PMNR…ELAQ), and 615–661 (KEAA…PDYR). Residues 132-297 (NYQDDAELAT…TTDCLQLLAY (166 aa)) are interaction with DSC1 and DSG1. The residue at position 182 (Ser182) is a Phosphoserine. An interaction with DSC1 region spans residues 574 to 661 (PMNRMEIFRL…ISEDKNPDYR (88 aa)). A phosphoserine mark is found at Ser665 and Ser730.

The protein belongs to the beta-catenin family. Homodimer. Component of an E-cadherin/catenin adhesion complex composed of at least E-cadherin/CDH1 and gamma-catenin/JUP, and possibly alpha-catenin/CTNNA1; the complex is located to adherens junctions. The stable association of CTNNA1 is controversial as CTNNA1 was shown not to bind to F-actin when assembled in the complex. Interacts with MUC1. Interacts with CAV1. Interacts with PTPRJ. Interacts with DSG1. Interacts with DSC1 and DSC2. Interacts with PKP2. Interacts with PKP3 (via N-terminus); the interaction is required for PKP3 localization to desmosome cell-cell junctions. Interacts with DSG4. Post-translationally, may be phosphorylated by FER.

It is found in the cell junction. Its subcellular location is the adherens junction. The protein localises to the desmosome. It localises to the cytoplasm. The protein resides in the cytoskeleton. It is found in the cell membrane. Its subcellular location is the nucleus. Functionally, common junctional plaque protein. The membrane-associated plaques are architectural elements in an important strategic position to influence the arrangement and function of both the cytoskeleton and the cells within the tissue. The presence of plakoglobin in both the desmosomes and in the intermediate junctions suggests that it plays a central role in the structure and function of submembranous plaques. Acts as a substrate for VE-PTP and is required by it to stimulate VE-cadherin function in endothelial cells. Can replace beta-catenin in E-cadherin/catenin adhesion complexes which are proposed to couple cadherins to the actin cytoskeleton. The protein is Junction plakoglobin of Bos taurus (Bovine).